We begin with the raw amino-acid sequence, 626 residues long: Carnitine O-acetyltransferase (626 aa).

An N6-succinyllysine modification is found at K93. An N6-acetyllysine; alternate modification is found at K261. K261 is subject to N6-succinyllysine; alternate. K268 carries the post-translational modification N6-acetyllysine. H343 serves as the catalytic Proton acceptor. CoA is bound by residues K419 and 423–430 (KSEKLSPD). Residues Y452 and S454 each contribute to the (R)-carnitine site. S456 contributes to the CoA binding site. A (R)-carnitine-binding site is contributed by T465. CoA-binding residues include R504 and Q555. The short motif at 624-626 (AKL) is the Microbody targeting signal element.

The protein belongs to the carnitine/choline acetyltransferase family. As to quaternary structure, monomer. Mostly in skeletal muscle, less in heart, liver and pancreas, only weakly detectable in brain, placenta, lung and kidney.

It is found in the endoplasmic reticulum. The protein localises to the peroxisome. It localises to the mitochondrion inner membrane. The protein resides in the mitochondrion. It carries out the reaction (R)-carnitine + acetyl-CoA = O-acetyl-(R)-carnitine + CoA. The catalysed reaction is propanoyl-CoA + (R)-carnitine = O-propanoyl-(R)-carnitine + CoA. It catalyses the reaction butanoyl-CoA + (R)-carnitine = O-butanoyl-(R)-carnitine + CoA. The enzyme catalyses hexanoyl-CoA + (R)-carnitine = O-hexanoyl-(R)-carnitine + CoA. It carries out the reaction octanoyl-CoA + (R)-carnitine = O-octanoyl-(R)-carnitine + CoA. The catalysed reaction is decanoyl-CoA + (R)-carnitine = O-decanoyl-(R)-carnitine + CoA. It catalyses the reaction 3-methylbutanoyl-CoA + (R)-carnitine = O-3-methylbutanoyl-(R)-carnitine + CoA. The enzyme catalyses 2-methylpropanoyl-CoA + (R)-carnitine = O-isobutanoyl-(R)-carnitine + CoA. It carries out the reaction 2-methylbutanoyl-CoA + (R)-carnitine = O-2-methylbutanoyl-(R)-carnitine + CoA. The catalysed reaction is acetoacetyl-CoA + (R)-carnitine = O-3-oxobutanoyl-(R)-carnitine + CoA. It catalyses the reaction 3-hydroxybutanoyl-CoA + (R)-carnitine = O-3-hydroxybutanoyl-(R)-carnitine + CoA. The enzyme catalyses 4,8-dimethylnonanoyl-CoA + (R)-carnitine = O-4,8-dimethylnonanoyl-(R)-carnitine + CoA. It carries out the reaction 2,6-dimethylheptanoyl-CoA + (R)-carnitine = O-2,6-dimethylheptanoyl-(R)-carnitine + CoA. Its function is as follows. Catalyzes the reversible transfer of acyl groups from carnitine to coenzyme A (CoA) and regulates the acyl-CoA/CoA ratio. Also plays a crucial role in the transport of fatty acids for beta-oxidation. Responsible for the synthesis of short- and branched-chain acylcarnitines. Active towards some branched-chain amino acid oxidation pathway (BCAAO) intermediates. Trans-2-enoyl-CoAs and 2-methylacyl-CoAs are poor substrates. The protein is Carnitine O-acetyltransferase of Homo sapiens (Human).